A 380-amino-acid chain; its full sequence is tRNA-specific 2-thiouridylase MnmA (380 aa).

Residues 26 to 33 and Leu52 contribute to the ATP site; that span reads AMSGGVDS. The active-site Nucleophile is Cys120. Cys120 and Cys217 are disulfide-bonded. Position 144 (Gly144) interacts with ATP. Residues 166–168 form an interaction with tRNA region; the sequence is RDQ. The active-site Cysteine persulfide intermediate is the Cys217.

It belongs to the MnmA/TRMU family.

The protein resides in the cytoplasm. The enzyme catalyses S-sulfanyl-L-cysteinyl-[protein] + uridine(34) in tRNA + AH2 + ATP = 2-thiouridine(34) in tRNA + L-cysteinyl-[protein] + A + AMP + diphosphate + H(+). Functionally, catalyzes the 2-thiolation of uridine at the wobble position (U34) of tRNA, leading to the formation of s(2)U34. This is tRNA-specific 2-thiouridylase MnmA from Roseobacter denitrificans (strain ATCC 33942 / OCh 114) (Erythrobacter sp. (strain OCh 114)).